A 330-amino-acid chain; its full sequence is MALPVYYDKDIDLGVIQSLQVGIIGYGAQGEAQALNLRDSKVKVRIGLYQGSLSVPKAKAEGFEVLEVKELVQQSDLIMALLPDELHKEVLEKEVIPFLKEGQIVGFAHGFSVHFNQVVLPKGVGAILVAPKGPGSALREEYLKNRGLYHLIAIEQESSKNNAKAVALSYAKAMGGGRMGVLETSFKEECESDLFGEQAVLCGGLEAIIRMGFETLIKAGYPEELAYFECVHEVKLVADLLHYKGVEGLRKHISNTAEFGAIKNREPMGNLLEKRMQKILKKIQNGSFAKDFLLEKSLNYPRLNTERKALKETKIEQIGEILRAPFNHKK.

One can recognise a KARI N-terminal Rossmann domain in the interval 3 to 184; sequence LPVYYDKDID…GGGRMGVLET (182 aa). Residues 26-29, Ser52, and Ser54 contribute to the NADP(+) site; that span reads YGAQ. His109 is an active-site residue. Residue Gly135 coordinates NADP(+). The KARI C-terminal knotted domain maps to 185–329; it reads SFKEECESDL…EILRAPFNHK (145 aa). Residues Asp193, Glu197, Glu229, and Glu233 each coordinate Mg(2+). Ser254 contributes to the substrate binding site.

The protein belongs to the ketol-acid reductoisomerase family. Mg(2+) is required as a cofactor.

It catalyses the reaction (2R)-2,3-dihydroxy-3-methylbutanoate + NADP(+) = (2S)-2-acetolactate + NADPH + H(+). It carries out the reaction (2R,3R)-2,3-dihydroxy-3-methylpentanoate + NADP(+) = (S)-2-ethyl-2-hydroxy-3-oxobutanoate + NADPH + H(+). It functions in the pathway amino-acid biosynthesis; L-isoleucine biosynthesis; L-isoleucine from 2-oxobutanoate: step 2/4. The protein operates within amino-acid biosynthesis; L-valine biosynthesis; L-valine from pyruvate: step 2/4. Its function is as follows. Involved in the biosynthesis of branched-chain amino acids (BCAA). Catalyzes an alkyl-migration followed by a ketol-acid reduction of (S)-2-acetolactate (S2AL) to yield (R)-2,3-dihydroxy-isovalerate. In the isomerase reaction, S2AL is rearranged via a Mg-dependent methyl migration to produce 3-hydroxy-3-methyl-2-ketobutyrate (HMKB). In the reductase reaction, this 2-ketoacid undergoes a metal-dependent reduction by NADPH to yield (R)-2,3-dihydroxy-isovalerate. This is Ketol-acid reductoisomerase (NADP(+)) from Helicobacter pylori (strain Shi470).